A 295-amino-acid chain; its full sequence is Dual specificity protein phosphatase 15 (295 aa).

The Tyrosine-protein phosphatase domain maps to 1 to 141 (MTEGVLPGLY…LEEFGWASSQ (141 aa)). Thr2 carries the N-myristoyl glycine lipid modification. The Phosphocysteine intermediate role is filled by Cys85. The segment covering 251–270 (SSSCTLSASTERPDGSSTPG) has biased composition (polar residues). The interval 251 to 272 (SSSCTLSASTERPDGSSTPGNP) is disordered.

Belongs to the protein-tyrosine phosphatase family. Non-receptor class dual specificity subfamily. Highly expressed in testis. Expressed in brain; up-regulated in patients with multiple sclerosis gray matter lesions.

It is found in the cytoplasm. It localises to the cell membrane. The enzyme catalyses O-phospho-L-tyrosyl-[protein] + H2O = L-tyrosyl-[protein] + phosphate. It carries out the reaction O-phospho-L-seryl-[protein] + H2O = L-seryl-[protein] + phosphate. It catalyses the reaction O-phospho-L-threonyl-[protein] + H2O = L-threonyl-[protein] + phosphate. May dephosphorylate MAPK13, ATF2, ERBB3, PDGFRB and SNX6. Its function is as follows. May play a role in the regulation of oligodendrocyte differentiation. May play a role in the regulation of myelin formation. Involved in the regulation of Erk1/2 phosphorylation in Schwann cells; the signaling may be linked to the regulation of myelination. The sequence is that of Dual specificity protein phosphatase 15 from Homo sapiens (Human).